A 307-amino-acid chain; its full sequence is Thiohydrolase apmlB (307 aa).

Belongs to the polyketide transferase af380 family.

In terms of biological role, thiohydrolase; part of the gene cluster that mediates the biosynthesis of phaeospelide A, a fungal polyene macrolide with a 34-membered macrolactone ring and an all-trans conjugated hexaene structure. The HR-PKS ApmlA uses acetyl-CoA and malonyl-CoA as its starter and extender units, respectively, and provides the large carbon framework in phaeospelide via 16 cycles of polyketide chain elongation, which is the largest number identified in fungal iterative PKSs thus far. During round 1, the KR domain reduces beta -ketone to an L-oriented hydroxy group, while during later rounds, it provides hydroxy groups in the D-configuration. The characteristic conjugated hexaene moiety is built during the later rounds (10-15), when the KR and DH domains are at work but ER is off. Phylogenetic analysis of the DH domain suggests that a polyene formation is programmed in the DH domain. Finally, the mature ACP-tethered carbon chain is transferred to the serine residue of the thiohydrolase apmlB, followed by intramolecular macrolactonization, generating phaeospelide A. When one elongation cycle during rounds 7-9 is skipped, phaeospelide B is biosynthesized instead. This Arthrinium phaeospermum (Gymnosporium phaeospermum) protein is Thiohydrolase apmlB.